We begin with the raw amino-acid sequence, 324 residues long: MGNLLKVLTCTDLEQGPNFFLDFENAQPTESEKEIYNQVNVVLKDAEGILEDLQSYRGAGHEIREAIQHPADEKLQEKAWGAVVPLVGKLKKFYEFSQRLEAALRGLLGALTSTPYSPTQHLEREQALAKQFAEILHFTLRFDELKMTNPAIQNDFSYYRRTLSRMRINNVPAEGENEVNNELANRMSLFYAEATPMLKTLSDATTKFVSENKNLPIENTTDCLSTMASVCRVMLETPEYRSRFTNEETVSFCLRVMVGVIILYDHVHPVGAFAKTSKIDMKGCIKVLKDQPPNSVEGLLNALRYTTKHLNDETTSKQIKSMLQ.

A lipid anchor (N-myristoyl glycine) is attached at glycine 2. Residue lysine 74 forms a Glycyl lysine isopeptide (Lys-Gly) (interchain with G-Cter in ubiquitin) linkage.

It belongs to the CYRI family. As to quaternary structure, interacts with RAC1 (GTP-bound form preferentially). Post-translationally, ubiquitinated at Lys-74 upon Salmonella bacterial infection.

It localises to the membrane. The protein resides in the mitochondrion. In terms of biological role, negatively regulates RAC1 signaling and RAC1-driven cytoskeletal remodeling. Regulates chemotaxis, cell migration and epithelial polarization by controlling the polarity, plasticity, duration and extent of protrusions. Limits Rac1 mediated activation of the Scar/WAVE complex, focuses protrusion signals and regulates pseudopod complexity by inhibiting Scar/WAVE-induced actin polymerization. Protects against Salmonella bacterial infection. Attenuates processes such as macropinocytosis, phagocytosis and cell migration and restrict sopE-mediated bacterial entry. Also restricts infection mediated by Mycobacterium tuberculosis and Listeria monocytogenes. Involved in the regulation of mitochondrial dynamics and oxidative stress. The chain is CYFIP-related Rac1 interactor B from Homo sapiens (Human).